The chain runs to 316 residues: Ribosomal RNA large subunit methyltransferase F (316 aa).

This sequence belongs to the methyltransferase superfamily. METTL16/RlmF family.

Its subcellular location is the cytoplasm. The enzyme catalyses adenosine(1618) in 23S rRNA + S-adenosyl-L-methionine = N(6)-methyladenosine(1618) in 23S rRNA + S-adenosyl-L-homocysteine + H(+). Functionally, specifically methylates the adenine in position 1618 of 23S rRNA. The chain is Ribosomal RNA large subunit methyltransferase F from Pseudomonas entomophila (strain L48).